Consider the following 297-residue polypeptide: Homoserine kinase (297 aa).

An ATP-binding site is contributed by Pro-82–Ser-92.

Belongs to the GHMP kinase family. Homoserine kinase subfamily.

It is found in the cytoplasm. It catalyses the reaction L-homoserine + ATP = O-phospho-L-homoserine + ADP + H(+). Its pathway is amino-acid biosynthesis; L-threonine biosynthesis; L-threonine from L-aspartate: step 4/5. In terms of biological role, catalyzes the ATP-dependent phosphorylation of L-homoserine to L-homoserine phosphate. The polypeptide is Homoserine kinase (Bacillus thuringiensis (strain Al Hakam)).